A 152-amino-acid chain; its full sequence is Natriuretic peptides A (152 aa).

The signal sequence occupies residues 1 to 24 (MGSSAITTSFLLFVAFQLPGQTGA). 2 propeptides span residues 25 to 122 (NPVY…TAPR) and 92 to 102 (EMGAPSDGDPG). Residues 50-108 (MPLEDEAVPSQVLSEQNEEAGAPLSPLSEVPPWDGGRSTQPREMGAPSDGDPGNPPRSV) form a disordered region. Ser-128 carries the post-translational modification Phosphoserine. An intrachain disulfide couples Cys-129 to Cys-145. The important for degradation of atrial natriuretic peptide by IDE stretch occupies residues 146–150 (NSFRY).

Belongs to the natriuretic peptide family. Homodimer; disulfide-linked antiparallel dimer. The precursor molecule is proteolytically cleaved by CORIN at Arg-122 to produce the atrial natriuretic peptide. Undergoes further proteolytic cleavage by unknown proteases to give rise to long-acting natriuretic peptide, vessel dilator and kaliuretic peptide. Additional processing gives rise to the auriculin and atriopeptin peptides. In the kidneys, alternative processing by an unknown protease results in the peptide urodilatin. In terms of processing, cleavage by MME initiates degradation of the factor and thereby regulates its activity. Degradation by IDE results in reduced activation of NPR1 (in vitro). During IDE degradation, the resulting products can temporarily stimulate NPR2 to produce cGMP, before the fragments are completely degraded and inactivated by IDE (in vitro). Post-translationally, degraded by IDE. Phosphorylation on Ser-128 decreases vasorelaxant activity.

The protein localises to the secreted. It localises to the perikaryon. Its subcellular location is the cell projection. In terms of biological role, hormone that plays a key role in mediating cardio-renal homeostasis, and is involved in vascular remodeling and regulating energy metabolism. Acts by specifically binding and stimulating NPR1 to produce cGMP, which in turn activates effector proteins, such as PRKG1, that drive various biological responses. Regulates vasodilation, natriuresis, diuresis and aldosterone synthesis and is therefore essential for regulating blood pressure, controlling the extracellular fluid volume and maintaining the fluid-electrolyte balance. Also involved in inhibiting cardiac remodeling and cardiac hypertrophy by inducing cardiomyocyte apoptosis and attenuating the growth of cardiomyocytes and fibroblasts. Plays a role in female pregnancy by promoting trophoblast invasion and spiral artery remodeling in uterus, and thus prevents pregnancy-induced hypertension. In adipose tissue, acts in various cGMP- and PKG-dependent pathways to regulate lipid metabolism and energy homeostasis. This includes up-regulating lipid metabolism and mitochondrial oxygen utilization by activating the AMP-activated protein kinase (AMPK), and increasing energy expenditure by acting via MAPK11 to promote the UCP1-dependent thermogenesis of brown adipose tissue. Binds the clearance receptor NPR3 which removes the hormone from circulation. May have a role in cardio-renal homeostasis through regulation of natriuresis, diuresis, vasodilation, and inhibiting aldosterone synthesis. In vitro, promotes the production of cGMP and induces vasodilation. May promote natriuresis, at least in part, by enhancing prostaglandin E2 synthesis resulting in the inhibition of renal Na+-K+-ATPase. However reports on the involvement of this peptide in mammal blood volume and blood pressure homeostasis are conflicting; according to a report, in vivo it is not sufficient to activate cGMP and does not inhibit collecting duct transport nor effect diuresis and natriuresis. Appears to bind to specific receptors that are distinct from the receptors bound by atrial natriuretic peptide and vessel dilator. Possibly enhances protein excretion in urine by decreasing proximal tubular protein reabsorption. Its function is as follows. May have a role in cardio-renal homeostasis through regulation of natriuresis, diuresis, and vasodilation. In vitro, promotes the production of cGMP and induces vasodilation. May promote natriuresis, at least in part, by enhancing prostaglandin E2 synthesis resulting in the inhibition of renal Na+-K+-ATPase. However reports on the involvement of this peptide in mammal blood volume and blood pressure homeostasis are conflicting; according to a report it is not sufficient to activate cGMP and does not inhibit collecting duct transport nor effect diuresis and natriuresis. Appears to bind to specific receptors that are distinct from the receptors bound by the atrial natriuretic and long-acting natriuretic peptides. Possibly functions in protein excretion in urine by maintaining the integrity of the proximal tubules and enhancing protein excretion by decreasing proximal tubular protein reabsorption. Functionally, may have a role in cardio-renal homeostasis through regulation of diuresis and inhibiting aldosterone synthesis. In vitro, promotes the production of cGMP and induces vasodilation. May promote natriuresis, at least in part, by enhancing prostaglandin E2 synthesis resulting in the inhibition of renal Na+-K+-ATPase. May have a role in potassium excretion but not sodium excretion (natriuresis). Possibly enhances protein excretion in urine by decreasing proximal tubular protein reabsorption. In terms of biological role, hormone produced in the kidneys that appears to be important for maintaining cardio-renal homeostasis. Mediates vasodilation, natriuresis and diuresis primarily in the renal system, in order to maintain the extracellular fluid volume and control the fluid-electrolyte balance. Specifically binds and stimulates cGMP production by renal transmembrane receptors, likely NPR1. Urodilatin not ANP, may be the natriuretic peptide responsible for the regulation of sodium and water homeostasis in the kidney. May have a role in cardio-renal homeostasis through regulation of natriuresis and vasodilation. In vivo promotes natriuresis and in vitro, vasodilates renal artery strips. Its function is as follows. May have a role in cardio-renal homeostasis through regulation of regulation of natriuresis and vasodilation. In vivo promotes natriuresis. In vitro, vasodilates intestinal smooth muscle but not smooth muscle strips. Functionally, may have a role in cardio-renal homeostasis through regulation of natriuresis and vasodilation. In vivo promotes natriuresis. In vitro, selectively vasodilates intestinal and vascular smooth muscle strips. In terms of biological role, may have a role in cardio-renal homeostasis through regulation of natriuresis and vasodilation. In vivo promotes natriuresis. In vitro, selectively vasodilates intestinal smooth muscle but not vascular smooth muscle strips. The polypeptide is Natriuretic peptides A (NPPA) (Ovis aries (Sheep)).